Consider the following 249-residue polypeptide: 3alpha-hydroxy bile acid-CoA-ester 3-dehydrogenase 1/3 (249 aa).

NAD(+) contacts are provided by residues 15–18 (TRGI), Glu38, Glu42, and Asn92. Ser144 is a binding site for substrate. Catalysis depends on proton donor/acceptor residues Tyr157 and Lys161. Residues Lys161 and 190 to 192 (VDT) contribute to the NAD(+) site.

It belongs to the short-chain dehydrogenases/reductases (SDR) family. In terms of assembly, homotetramer.

The catalysed reaction is a 3alpha-hydroxy bile acid CoA + NAD(+) = a 3-oxo bile acid CoA + NADH + H(+). The enzyme catalyses choloyl-CoA + NAD(+) = 7alpha,12alpha-dihydroxy-3-oxochol-24-oyl-CoA + NADH + H(+). It carries out the reaction chenodeoxycholoyl-CoA + NAD(+) = 7alpha-hydroxy-3-oxochol-24-oyl-CoA + NADH + H(+). It catalyses the reaction deoxycholoyl-CoA + NAD(+) = 12alpha-hydroxy-3-oxocholan-24-oyl-CoA + NADH + H(+). The catalysed reaction is lithocholoyl-CoA + NAD(+) = 3-oxocholan-24-oyl-CoA + NADH + H(+). The protein operates within lipid metabolism; bile acid biosynthesis. Functionally, involved in the multi-step bile acid 7alpha-dehydroxylation pathway that transforms primary bile acids to secondary bile acids in the human gut. Catalyzes the oxidation of C3-hydroxyl group of CoA conjugated bile acids generating a C3-oxo bile acid intermediate. Can use choloyl-CoA, chenodeoxycholoyl-CoA, deoxycholoyl-CoA, and lithocholoyl-CoA as substrates with similar efficiency. Highly prefers NAD over NADP as cosubstrate. Also catalyzes the reverse reactions; in vitro, the preferred direction of reaction depends on the pH. Has very little activity with unconjugated (non-CoA) bile acid substrates. The chain is 3alpha-hydroxy bile acid-CoA-ester 3-dehydrogenase 1/3 (baiA1) from Clostridium scindens (strain JCM 10418 / VPI 12708).